Here is a 108-residue protein sequence, read N- to C-terminus: Integration host factor subunit alpha (108 aa).

Belongs to the bacterial histone-like protein family. As to quaternary structure, heterodimer of an alpha and a beta chain.

Its function is as follows. This protein is one of the two subunits of integration host factor, a specific DNA-binding protein that functions in genetic recombination as well as in transcriptional and translational control. The polypeptide is Integration host factor subunit alpha (Methylorubrum extorquens (strain CM4 / NCIMB 13688) (Methylobacterium extorquens)).